Here is a 389-residue protein sequence, read N- to C-terminus: Gastricsin (389 aa).

Residues 1 to 16 (MKWMVVVLLCLQLLEA) form the signal peptide. Positions 17 to 59 (KVVKVPLKKLKSLRETMKEKGLLEEFLKNHKYDPAQKYRYTDF) are cleaved as a propeptide — activation peptide. In terms of domain architecture, Peptidase A1 spans 73–386 (YFGEISIGTP…DMGNNRVGFA (314 aa)). Asp91 is a catalytic residue. Disulfide bonds link Cys104-Cys109 and Cys268-Cys272. Asp277 is an active-site residue. A disulfide bridge connects residues Cys311 and Cys344.

It belongs to the peptidase A1 family.

Its subcellular location is the secreted. It carries out the reaction More restricted specificity than pepsin A, but shows preferential cleavage at Tyr-|-Xaa bonds. High activity on hemoglobin.. Hydrolyzes a variety of proteins. This Rhinolophus ferrumequinum (Greater horseshoe bat) protein is Gastricsin (PGC).